The sequence spans 564 residues: Sulfite reductase [NADPH] hemoprotein beta-component 1 (564 aa).

Residues cysteine 426, cysteine 432, cysteine 471, and cysteine 475 each contribute to the [4Fe-4S] cluster site. Residue cysteine 475 coordinates siroheme.

The protein belongs to the nitrite and sulfite reductase 4Fe-4S domain family. As to quaternary structure, alpha(8)-beta(8). The alpha component is a flavoprotein, the beta component is a hemoprotein. The cofactor is siroheme. [4Fe-4S] cluster is required as a cofactor.

It carries out the reaction hydrogen sulfide + 3 NADP(+) + 3 H2O = sulfite + 3 NADPH + 4 H(+). The protein operates within sulfur metabolism; hydrogen sulfide biosynthesis; hydrogen sulfide from sulfite (NADPH route): step 1/1. In terms of biological role, component of the sulfite reductase complex that catalyzes the 6-electron reduction of sulfite to sulfide. This is one of several activities required for the biosynthesis of L-cysteine from sulfate. The sequence is that of Sulfite reductase [NADPH] hemoprotein beta-component 1 from Pectobacterium carotovorum subsp. carotovorum (strain PC1).